The primary structure comprises 412 residues: Serine/threonine transporter SstT (412 aa).

The next 10 membrane-spanning stretches (helical) occupy residues 16 to 36 (LVAQ…FLPG), 44 to 64 (LGDL…FVLV), 82 to 102 (IIVL…LASF), 115 to 135 (TDVI…FNIV), 141 to 161 (ALLN…GFAF), 179 to 199 (VTLI…GLVA), 217 to 237 (LLVL…LIVF), 298 to 318 (MGGA…TLGI), 330 to 350 (LLAA…LLLI), and 357 to 377 (FGIS…IGVV).

It belongs to the dicarboxylate/amino acid:cation symporter (DAACS) (TC 2.A.23) family.

It localises to the cell inner membrane. It catalyses the reaction L-serine(in) + Na(+)(in) = L-serine(out) + Na(+)(out). The catalysed reaction is L-threonine(in) + Na(+)(in) = L-threonine(out) + Na(+)(out). Its function is as follows. Involved in the import of serine and threonine into the cell, with the concomitant import of sodium (symport system). This Stutzerimonas stutzeri (strain A1501) (Pseudomonas stutzeri) protein is Serine/threonine transporter SstT.